The sequence spans 67 residues: Small ribosomal subunit protein bS21 (67 aa).

Belongs to the bacterial ribosomal protein bS21 family.

This chain is Small ribosomal subunit protein bS21, found in Paramagnetospirillum magneticum (strain ATCC 700264 / AMB-1) (Magnetospirillum magneticum).